Reading from the N-terminus, the 329-residue chain is DNA-directed RNA polymerase subunit alpha (329 aa).

Residues methionine 1–arginine 235 are alpha N-terminal domain (alpha-NTD). An alpha C-terminal domain (alpha-CTD) region spans residues phenylalanine 249–glutamate 329.

It belongs to the RNA polymerase alpha chain family. As to quaternary structure, homodimer. The RNAP catalytic core consists of 2 alpha, 1 beta, 1 beta' and 1 omega subunit. When a sigma factor is associated with the core the holoenzyme is formed, which can initiate transcription.

The catalysed reaction is RNA(n) + a ribonucleoside 5'-triphosphate = RNA(n+1) + diphosphate. Functionally, DNA-dependent RNA polymerase catalyzes the transcription of DNA into RNA using the four ribonucleoside triphosphates as substrates. The polypeptide is DNA-directed RNA polymerase subunit alpha (Buchnera aphidicola subsp. Schizaphis graminum (strain Sg)).